We begin with the raw amino-acid sequence, 122 residues long: Large ribosomal subunit protein uL18 (122 aa).

This sequence belongs to the universal ribosomal protein uL18 family. As to quaternary structure, part of the 50S ribosomal subunit; part of the 5S rRNA/L5/L18/L25 subcomplex. Contacts the 5S and 23S rRNAs.

Functionally, this is one of the proteins that bind and probably mediate the attachment of the 5S RNA into the large ribosomal subunit, where it forms part of the central protuberance. This is Large ribosomal subunit protein uL18 from Desulfatibacillum aliphaticivorans.